The sequence spans 637 residues: 1-deoxy-D-xylulose-5-phosphate synthase (637 aa).

Thiamine diphosphate contacts are provided by residues H76 and 117–119; that span reads AHS. D148 is a binding site for Mg(2+). Residues 149 to 150, N177, Y287, and E369 each bind thiamine diphosphate; that span reads GA. Residue N177 coordinates Mg(2+).

It belongs to the transketolase family. DXPS subfamily. In terms of assembly, homodimer. The cofactor is Mg(2+). Thiamine diphosphate is required as a cofactor.

It catalyses the reaction D-glyceraldehyde 3-phosphate + pyruvate + H(+) = 1-deoxy-D-xylulose 5-phosphate + CO2. It participates in metabolic intermediate biosynthesis; 1-deoxy-D-xylulose 5-phosphate biosynthesis; 1-deoxy-D-xylulose 5-phosphate from D-glyceraldehyde 3-phosphate and pyruvate: step 1/1. Its function is as follows. Catalyzes the acyloin condensation reaction between C atoms 2 and 3 of pyruvate and glyceraldehyde 3-phosphate to yield 1-deoxy-D-xylulose-5-phosphate (DXP). This chain is 1-deoxy-D-xylulose-5-phosphate synthase, found in Pelagibacter ubique (strain HTCC1062).